Consider the following 122-residue polypeptide: Large ribosomal subunit protein uL14 (122 aa).

Belongs to the universal ribosomal protein uL14 family. In terms of assembly, part of the 50S ribosomal subunit. Forms a cluster with proteins L3 and L19. In the 70S ribosome, L14 and L19 interact and together make contacts with the 16S rRNA in bridges B5 and B8.

Functionally, binds to 23S rRNA. Forms part of two intersubunit bridges in the 70S ribosome. The chain is Large ribosomal subunit protein uL14 from Paraburkholderia phytofirmans (strain DSM 17436 / LMG 22146 / PsJN) (Burkholderia phytofirmans).